A 112-amino-acid polypeptide reads, in one-letter code: MEKILVLLLVALAVVYAVPDPRGIIIHLEDGELCLNSVQCKSKCCHRATGLSLARCAPKASENSECSAKTLYGVYYKCPCERGLTCEGDKSIVGSITNTNFGVCHDAGRSKK.

An N-terminal signal peptide occupies residues 1 to 17; it reads MEKILVLLLVALAVVYA. Positions 18 to 22 are cleaved as a propeptide — enterostatin, activation peptide; the sequence is VPDPR. 5 cysteine pairs are disulfide-bonded: cysteine 34-cysteine 45, cysteine 40-cysteine 56, cysteine 44-cysteine 78, cysteine 66-cysteine 86, and cysteine 80-cysteine 104.

The protein belongs to the colipase family. In terms of assembly, forms a 1:1 stoichiometric complex with pancreatic lipase. In terms of tissue distribution, expressed by the pancreas.

It localises to the secreted. Functionally, colipase is a cofactor of pancreatic lipase. It allows the lipase to anchor itself to the lipid-water interface. Without colipase the enzyme is washed off by bile salts, which have an inhibitory effect on the lipase. In terms of biological role, enterostatin has a biological activity as a satiety signal. The polypeptide is Colipase (CLPS) (Canis lupus familiaris (Dog)).